Here is a 253-residue protein sequence, read N- to C-terminus: CD151 antigen (253 aa).

The Cytoplasmic segment spans residues 1 to 18 (MGEFNEKKTTCGTVCLKY). Residues Cys11 and Cys15 are each lipidated (S-palmitoyl cysteine). Residues 19 to 39 (LLFTYNCCFWLAGLAVMAVGI) traverse the membrane as a helical segment. The Extracellular segment spans residues 40-57 (WTLALKSDYISLLASGTY). Residues 58–78 (LATAYILVVAGTVVMVTGVLG) form a helical membrane-spanning segment. At 79–91 (CCATFKERRNLLR) the chain is on the cytoplasmic side. A helical membrane pass occupies residues 92–112 (LYFILLLIIFLLEIIAGILAY). At 113 to 221 (AYYQQLNTEL…LETFIQEHLR (109 aa)) the chain is on the extracellular side. N-linked (GlcNAc...) asparagine glycosylation is present at Asn159. Residues 222–242 (VIGAVGIGIACVQVFGMIFTC) traverse the membrane as a helical segment. Residues Cys242 and Cys243 are each lipidated (S-palmitoyl cysteine). Residues 243-253 (CLYRSLKLEHY) are Cytoplasmic-facing.

The protein belongs to the tetraspanin (TM4SF) family. Interacts with integrins ITGA3:ITGB1, ITGA5:ITGB1, ITGA3:ITGB1 and ITGA6:ITGB4 and with CD9 and CD181. Interacts (via the second extracellular domain) with integrin ITGAV:ITGB3. Interacts with ITGA3; this interaction modulates ITGA3 glycosylation pattern. Interacts with F11R. Interacts with RAC1 and CDC42; these interactions mediate physical association of RAC1 and CDC42 with integrin adhesion receptor complexes. In terms of processing, palmitoylated. Palmitoylation by ZDHHC2 regulates CD151 expression, association with other tetraspanin family proteins and function in cell adhesion. Post-translationally, ubiquitinated by RNF128 on lysine residues present in the tetraspanin amino terminus via 'Lys-48'-linked ubiquitin leading to proteasomal degradation. Expressed in a variety of tissues including vascular endothelium and epidermis. Expressed on erythroid cells, with a higher level of expression in erythroid precursors than on mature erythrocytes. Acts as a sensitive T-cell activation marker.

Its subcellular location is the cell membrane. Functionally, structural component of specialized membrane microdomains known as tetraspanin-enriched microdomains (TERMs), which act as platforms for receptor clustering and signaling. Plays a role in various cellular and molecular mechanism through its association with both integrin and non-integrin proteins. These interactions facilitate critical cellular functions, including cell-to-cell communication, wound healing, platelet aggregation, trafficking, cell motility, and angiogenesis. Via interaction with JAM-A/F11R and integrin ITGA3:ITGB1, promotes the recruitment of signaling molecules such as RAC1, CDC42 and RhoGTPases to facilitate the polarization of epithelial cells and the reorganization of the actin cytoskeleton, which are critical steps in cell migration process. Regulates the glycosylation pattern of ITGA3:ITGB1 thereby modulating its activity. Plays an essential role in the maintenance of central laminin-binding integrin ITGA6:ITGB4-containing adhesion complexes. Essential for the proper assembly of the glomerular and tubular basement membranes in kidney. Contributes to T-cell activation by modulating integrin signaling leading to activation of downstream targets PTK2 and MAPK1/MAPK3. Its function is as follows. (Microbial infection) Plays a role in human papillomavirus 16/HPV-16 endocytosis upon binding to cell surface receptor. In terms of biological role, (Microbial infection) Plays a role in human cytomegalovirus entry into host cell by contributing to entry receptor binding, membrane fusion, or release of the capsid. This chain is CD151 antigen (CD151), found in Homo sapiens (Human).